The chain runs to 312 residues: Short chain dehydrogenase pgmD (312 aa).

NADP(+) is bound by residues Val-46, Ile-47, Lys-171, Tyr-207, Lys-211, and Thr-242. The active-site Proton donor is the Tyr-207. Lys-211 (lowers pKa of active site Tyr) is an active-site residue.

The protein belongs to the short-chain dehydrogenases/reductases (SDR) family.

It participates in pigment biosynthesis. The protein operates within secondary metabolite biosynthesis. In terms of biological role, short chain dehydrogenase; part of the gene cluster that mediates the biosynthesis of pleosporalin A, ascomycone A, as well as a third cryptic naphthoquinone derived pigment, all responsible for the coloration of conidia. Essential for the production of pleosporalin A, but not the 2 other final products. The pathway begins with the biosynthesis of the cyclized heptaketide 3-acetonyl-1,6,8-trihydroxy-2-naphthaldehyde by the NR-PKS pgmA. The C-6 hydroxyl group is further methylated by the O-methyltransferase pgmB to yield fusarubinaldehyde which is in turn oxidized by the cytochrome P450 monooxygenase pgmC at C-9. The C-1 hydroxyl group is then methylated spontaneously. Although pgmE, pgmD and pgmH are essential for the production of pleosporalin A, it is not the case for the 2 other final products and it remains difficult to assign a specific function to each enzyme. PgmF and pgmG seem not to be involved in pigment biosynthesis although they were regulated by the cluster-specific transcription factor pgmR. The chain is Short chain dehydrogenase pgmD from Aspergillus terreus (strain NIH 2624 / FGSC A1156).